The chain runs to 615 residues: Fibrinogen alpha chain (615 aa).

Residues 1-19 form the signal peptide; it reads MFSVRDLCLVLSLVGAIKT. A coiled-coil region spans residues 71 to 602; the sequence is CRMKGLIDEV…GHTKARPARG (532 aa). A disordered region spans residues 267–427; that stretch reads FGGDGHARGD…TKQEFHTGKL (161 aa). Polar residues predominate over residues 293–302; that stretch reads GTSSIGNVNP. O-linked (GalNAc...) threonine glycosylation occurs at Thr-325. Low complexity predominate over residues 373–396; it reads GSAGTWNTGSSGSSSFRPDSSGHG. Cysteines 455 and 485 form a disulfide. A disordered region spans residues 530-615; the sequence is EFAALGESGS…SPLGEPSLTP (86 aa). Low complexity predominate over residues 537-549; that stretch reads SGSSSSKTSTHSK. The segment covering 550–560 has biased composition (polar residues); that stretch reads QFVSSSTTVNR. Basic residues predominate over residues 591–601; the sequence is QKGHTKARPAR.

As to quaternary structure, heterohexamer; disulfide linked. Contains 2 sets of 3 non-identical chains (alpha, beta and gamma). The 2 heterotrimers are in head to head conformation with the N-termini in a small central domain. In terms of processing, conversion of fibrinogen to fibrin is triggered by thrombin, which cleaves fibrinopeptides A and B from alpha and beta chains, and thus exposes the N-terminal polymerization sites responsible for the formation of the soft clot. The soft clot is converted into the hard clot by factor XIIIA which catalyzes the epsilon-(gamma-glutamyl)lysine cross-linking between gamma chains (stronger) and between alpha chains (weaker) of different monomers. Forms F13A-mediated cross-links between a glutamine and the epsilon-amino group of a lysine residue, forming fibronectin-fibrinogen heteropolymers.

It localises to the secreted. Functionally, cleaved by the protease thrombin to yield monomers which, together with fibrinogen beta (FGB) and fibrinogen gamma (FGG), polymerize to form an insoluble fibrin matrix. Fibrin has a major function in hemostasis as one of the primary components of blood clots. In addition, functions during the early stages of wound repair to stabilize the lesion and guide cell migration during re-epithelialization. Was originally thought to be essential for platelet aggregation, based on in vitro studies using anticoagulated blood. However, subsequent studies have shown that it is not absolutely required for thrombus formation in vivo. Enhances expression of SELP in activated platelets via an ITGB3-dependent pathway. Maternal fibrinogen is essential for successful pregnancy. Fibrin deposition is also associated with infection, where it protects against IFNG-mediated hemorrhage. May also facilitate the immune response via both innate and T-cell mediated pathways. The polypeptide is Fibrinogen alpha chain (FGA) (Bos taurus (Bovine)).